Here is a 147-residue protein sequence, read N- to C-terminus: Bis(5'-nucleosyl)-tetraphosphatase [asymmetrical] (147 aa).

Ala-2 is modified (N-acetylalanine). The region spanning 2-139 (ALRACGLIIF…EMKATLQEGH (138 aa)) is the Nudix hydrolase domain. A Nudix box motif is present at residues 43–64 (GHVDPGENDLETALRETQEETG).

This sequence belongs to the Nudix hydrolase family. A divalent metal cation serves as cofactor.

It carries out the reaction P(1),P(4)-bis(5'-guanosyl) tetraphosphate + H2O = GMP + GTP + 2 H(+). The catalysed reaction is a 5'-end CoA-ribonucleoside in mRNA + H2O = a 5'-end phospho-adenosine-phospho-ribonucleoside in mRNA + (R)-4'-phosphopantetheine + 2 H(+). It catalyses the reaction a 5'-end FAD-phospho-ribonucleoside in mRNA + H2O = a 5'-end phospho-adenosine-phospho-ribonucleoside in mRNA + FMN + 2 H(+). Catalyzes the asymmetric hydrolysis of diadenosine 5',5'''-P1,P4-tetraphosphate (Ap4A) to yield AMP and ATP. Exhibits decapping activity towards FAD-capped RNAs and dpCoA-capped RNAs in vitro. The sequence is that of Bis(5'-nucleosyl)-tetraphosphatase [asymmetrical] (Nudt2) from Rattus norvegicus (Rat).